A 100-amino-acid chain; its full sequence is ATP synthase subunit c (100 aa).

2 consecutive transmembrane segments (helical) span residues 27 to 47 (SVIA…IGMG) and 72 to 92 (FIAL…TLIV).

The protein belongs to the ATPase C chain family. In terms of assembly, F-type ATPases have 2 components, F(1) - the catalytic core - and F(0) - the membrane proton channel. F(1) has five subunits: alpha(3), beta(3), gamma(1), delta(1), epsilon(1). F(0) has three main subunits: a(1), b(2) and c(10-14). The alpha and beta chains form an alternating ring which encloses part of the gamma chain. F(1) is attached to F(0) by a central stalk formed by the gamma and epsilon chains, while a peripheral stalk is formed by the delta and b chains.

It is found in the cell inner membrane. F(1)F(0) ATP synthase produces ATP from ADP in the presence of a proton or sodium gradient. F-type ATPases consist of two structural domains, F(1) containing the extramembraneous catalytic core and F(0) containing the membrane proton channel, linked together by a central stalk and a peripheral stalk. During catalysis, ATP synthesis in the catalytic domain of F(1) is coupled via a rotary mechanism of the central stalk subunits to proton translocation. Functionally, key component of the F(0) channel; it plays a direct role in translocation across the membrane. A homomeric c-ring of between 10-14 subunits forms the central stalk rotor element with the F(1) delta and epsilon subunits. This is ATP synthase subunit c from Campylobacter concisus (strain 13826).